The following is a 717-amino-acid chain: DNA ligase (717 aa).

NAD(+) is bound by residues 44 to 48 (DADYD), 93 to 94 (SL), and E127. The active-site N6-AMP-lysine intermediate is K129. Residues R150, E186, K302, and K326 each contribute to the NAD(+) site. Zn(2+)-binding residues include C431, C434, C455, and C461. Positions 639-717 (STDSPVAGKT…EDEWLALIGG (79 aa)) constitute a BRCT domain.

This sequence belongs to the NAD-dependent DNA ligase family. LigA subfamily. Mg(2+) is required as a cofactor. It depends on Mn(2+) as a cofactor.

It carries out the reaction NAD(+) + (deoxyribonucleotide)n-3'-hydroxyl + 5'-phospho-(deoxyribonucleotide)m = (deoxyribonucleotide)n+m + AMP + beta-nicotinamide D-nucleotide.. In terms of biological role, DNA ligase that catalyzes the formation of phosphodiester linkages between 5'-phosphoryl and 3'-hydroxyl groups in double-stranded DNA using NAD as a coenzyme and as the energy source for the reaction. It is essential for DNA replication and repair of damaged DNA. In Sinorhizobium fredii (strain NBRC 101917 / NGR234), this protein is DNA ligase.